The sequence spans 103 residues: Large ribosomal subunit protein bL21 (103 aa).

It belongs to the bacterial ribosomal protein bL21 family. In terms of assembly, part of the 50S ribosomal subunit. Contacts protein L20.

Its function is as follows. This protein binds to 23S rRNA in the presence of protein L20. The protein is Large ribosomal subunit protein bL21 of Acidovorax ebreus (strain TPSY) (Diaphorobacter sp. (strain TPSY)).